We begin with the raw amino-acid sequence, 207 residues long: Urease accessory protein UreG (207 aa).

16–23 (GPVGSGKT) contributes to the GTP binding site.

It belongs to the SIMIBI class G3E GTPase family. UreG subfamily. As to quaternary structure, homodimer. UreD, UreF and UreG form a complex that acts as a GTP-hydrolysis-dependent molecular chaperone, activating the urease apoprotein by helping to assemble the nickel containing metallocenter of UreC. The UreE protein probably delivers the nickel.

It is found in the cytoplasm. In terms of biological role, facilitates the functional incorporation of the urease nickel metallocenter. This process requires GTP hydrolysis, probably effectuated by UreG. This Shewanella halifaxensis (strain HAW-EB4) protein is Urease accessory protein UreG.